A 124-amino-acid polypeptide reads, in one-letter code: Small ribosomal subunit protein uS13 (124 aa).

Residues 95 to 124 are disordered; sequence GLPVNGQRTRTNARSSKGPRRTVAGKKKAR. The span at 100–109 shows a compositional bias: polar residues; it reads GQRTRTNARS. The segment covering 111 to 124 has biased composition (basic residues); sequence KGPRRTVAGKKKAR.

This sequence belongs to the universal ribosomal protein uS13 family. As to quaternary structure, part of the 30S ribosomal subunit. Forms a loose heterodimer with protein S19. Forms two bridges to the 50S subunit in the 70S ribosome.

In terms of biological role, located at the top of the head of the 30S subunit, it contacts several helices of the 16S rRNA. In the 70S ribosome it contacts the 23S rRNA (bridge B1a) and protein L5 of the 50S subunit (bridge B1b), connecting the 2 subunits; these bridges are implicated in subunit movement. Contacts the tRNAs in the A and P-sites. This Tropheryma whipplei (strain TW08/27) (Whipple's bacillus) protein is Small ribosomal subunit protein uS13.